Here is a 544-residue protein sequence, read N- to C-terminus: Chaperonin GroEL 2 (544 aa).

Residues 30 to 33, Lys-51, 87 to 91, Gly-415, and Asp-496 contribute to the ATP site; these read TLGP and DGTTT.

This sequence belongs to the chaperonin (HSP60) family. Forms a cylinder of 14 subunits composed of two heptameric rings stacked back-to-back. Interacts with the co-chaperonin GroES.

The protein resides in the cytoplasm. It carries out the reaction ATP + H2O + a folded polypeptide = ADP + phosphate + an unfolded polypeptide.. Together with its co-chaperonin GroES, plays an essential role in assisting protein folding. The GroEL-GroES system forms a nano-cage that allows encapsulation of the non-native substrate proteins and provides a physical environment optimized to promote and accelerate protein folding. This chain is Chaperonin GroEL 2, found in Rhizobium johnstonii (strain DSM 114642 / LMG 32736 / 3841) (Rhizobium leguminosarum bv. viciae).